Consider the following 173-residue polypeptide: Globin-like host-protective antigen (173 aa).

An N-terminal signal peptide occupies residues 1-15 (MRFLLLAAFVAYAYA). Residues 25–166 (ALSALDVVPL…FNDEAQKQLA (142 aa)) enclose the Globin domain. H114 serves as a coordination point for heme b.

This sequence belongs to the globin family.

The protein localises to the secreted. The protein resides in the extracellular space. In terms of biological role, may be a globin and may play a role in oxygen transport. The sequence is that of Globin-like host-protective antigen from Trichostrongylus colubriformis (Black scour worm).